A 436-amino-acid polypeptide reads, in one-letter code: Trigger factor (436 aa).

A PPIase FKBP-type domain is found at 163–248 (GDRVVLDFAG…VKEVAEGVLP (86 aa)).

It belongs to the FKBP-type PPIase family. Tig subfamily.

It localises to the cytoplasm. It catalyses the reaction [protein]-peptidylproline (omega=180) = [protein]-peptidylproline (omega=0). Its function is as follows. Involved in protein export. Acts as a chaperone by maintaining the newly synthesized protein in an open conformation. Functions as a peptidyl-prolyl cis-trans isomerase. The sequence is that of Trigger factor from Bordetella pertussis (strain Tohama I / ATCC BAA-589 / NCTC 13251).